We begin with the raw amino-acid sequence, 192 residues long: MAQMYFYYSAMNAGKSTTLLQSSFNYQERGMTPVIFTAALDDRYGIGKVSSRIGLQAEAQLFKADTNLYQEIAALNEVEKRHCILVDECQFLSKEQVYQLTEVVDKLHIPVLCYGLRTDFLGELFEGSKYLLSWADKLVELKTICHCGRKANMVIRTDEHGNAIKEGDQVAIGGNDRYVSVCRQHYKEALGK.

Residues 9–16 and 87–90 contribute to the ATP site; these read SAMNAGKS and DECQ. The Proton acceptor role is filled by E88. 4 residues coordinate Zn(2+): C145, C147, C182, and H185.

This sequence belongs to the thymidine kinase family. Homotetramer.

The protein resides in the cytoplasm. The catalysed reaction is thymidine + ATP = dTMP + ADP + H(+). In Vibrio vulnificus (strain YJ016), this protein is Thymidine kinase.